The sequence spans 180 residues: GTP cyclohydrolase 1 (180 aa).

Positions 71, 74, and 142 each coordinate Zn(2+).

The protein belongs to the GTP cyclohydrolase I family. Homomer.

It carries out the reaction GTP + H2O = 7,8-dihydroneopterin 3'-triphosphate + formate + H(+). It functions in the pathway cofactor biosynthesis; 7,8-dihydroneopterin triphosphate biosynthesis; 7,8-dihydroneopterin triphosphate from GTP: step 1/1. In Helicobacter pylori (strain G27), this protein is GTP cyclohydrolase 1.